Reading from the N-terminus, the 360-residue chain is Alpha-2-macroglobulin receptor-associated protein (360 aa).

Residues 1 to 33 (MAPLRDRVSTLPRLQLLVLLLLPLLLVPQPIAG) form the signal peptide. Phosphoserine occurs at positions 53 and 138. Positions 222–302 (SKHSELKDRL…KHNHYQKQLE (81 aa)) form a coiled coil. Residues 240-356 (RLRKVSHQGY…DLSSRVSRAR (117 aa)) form an LDL receptor binding region. Residue asparagine 271 is glycosylated (N-linked (GlcNAc...) asparagine). The short motif at 357–360 (HNEL) is the Prevents secretion from ER element.

This sequence belongs to the alpha-2-MRAP family. Interacts with the LRP1/alpha-2-macroglobulin receptor heavy and light chains; the interaction is transient and coincides with a reduction of ligand binding by the receptor. Interacts with LRP2/glycoprotein 330. Interacts with LRP1B; binding is followed by internalization and degradation. Interacts with LDLR. Interacts with SORL1. Interacts with LRP1; this interaction is followed by rapid internalization. Post-translationally, N-glycosylated.

The protein localises to the rough endoplasmic reticulum lumen. Its subcellular location is the endoplasmic reticulum-Golgi intermediate compartment lumen. It is found in the golgi apparatus. It localises to the cis-Golgi network. The protein resides in the golgi apparatus lumen. The protein localises to the endosome lumen. Its subcellular location is the cell surface. Functionally, molecular chaperone for LDL receptor-related proteins that may regulate their ligand binding activity along the secretory pathway. This chain is Alpha-2-macroglobulin receptor-associated protein (Lrpap1), found in Rattus norvegicus (Rat).